The primary structure comprises 514 residues: 2,3-bisphosphoglycerate-independent phosphoglycerate mutase (514 aa).

2 residues coordinate Mn(2+): aspartate 14 and serine 64. Serine 64 functions as the Phosphoserine intermediate in the catalytic mechanism. Residues histidine 125, 155 to 156, arginine 187, arginine 193, 263 to 266, and lysine 336 each bind substrate; these read RD and RADR. The Mn(2+) site is built by aspartate 403, histidine 407, aspartate 444, histidine 445, and histidine 463.

This sequence belongs to the BPG-independent phosphoglycerate mutase family. In terms of assembly, monomer. The cofactor is Mn(2+).

It carries out the reaction (2R)-2-phosphoglycerate = (2R)-3-phosphoglycerate. It functions in the pathway carbohydrate degradation; glycolysis; pyruvate from D-glyceraldehyde 3-phosphate: step 3/5. In terms of biological role, catalyzes the interconversion of 2-phosphoglycerate and 3-phosphoglycerate. This chain is 2,3-bisphosphoglycerate-independent phosphoglycerate mutase, found in Escherichia coli (strain ATCC 8739 / DSM 1576 / NBRC 3972 / NCIMB 8545 / WDCM 00012 / Crooks).